We begin with the raw amino-acid sequence, 203 residues long: dITP/XTP pyrophosphatase (203 aa).

8–13 (TANKGK) contacts substrate. 2 residues coordinate Mg(2+): E41 and D70. D70 (proton acceptor) is an active-site residue. Residues S71, 153–156 (FGYD), K176, and 181–182 (HR) each bind substrate.

The protein belongs to the HAM1 NTPase family. Homodimer. Mg(2+) serves as cofactor.

The catalysed reaction is XTP + H2O = XMP + diphosphate + H(+). It catalyses the reaction dITP + H2O = dIMP + diphosphate + H(+). It carries out the reaction ITP + H2O = IMP + diphosphate + H(+). In terms of biological role, pyrophosphatase that catalyzes the hydrolysis of nucleoside triphosphates to their monophosphate derivatives, with a high preference for the non-canonical purine nucleotides XTP (xanthosine triphosphate), dITP (deoxyinosine triphosphate) and ITP. Seems to function as a house-cleaning enzyme that removes non-canonical purine nucleotides from the nucleotide pool, thus preventing their incorporation into DNA/RNA and avoiding chromosomal lesions. The sequence is that of dITP/XTP pyrophosphatase from Listeria monocytogenes serotype 4b (strain F2365).